We begin with the raw amino-acid sequence, 186 residues long: Peptide deformylase (186 aa).

Residues C99 and H141 each coordinate Fe cation. Residue E142 is part of the active site. H145 provides a ligand contact to Fe cation.

Belongs to the polypeptide deformylase family. Fe(2+) is required as a cofactor.

It carries out the reaction N-terminal N-formyl-L-methionyl-[peptide] + H2O = N-terminal L-methionyl-[peptide] + formate. Removes the formyl group from the N-terminal Met of newly synthesized proteins. Requires at least a dipeptide for an efficient rate of reaction. N-terminal L-methionine is a prerequisite for activity but the enzyme has broad specificity at other positions. The protein is Peptide deformylase of Chlamydia caviae (strain ATCC VR-813 / DSM 19441 / 03DC25 / GPIC) (Chlamydophila caviae).